We begin with the raw amino-acid sequence, 688 residues long: Elongation factor G (688 aa).

The tr-type G domain maps to 8-282; that stretch reads EKFRNFGIMA…GVVDYLPSPL (275 aa). GTP is bound by residues 17–24, 81–85, and 135–138; these read AHIDAGKT, DTPGH, and NKMD.

The protein belongs to the TRAFAC class translation factor GTPase superfamily. Classic translation factor GTPase family. EF-G/EF-2 subfamily.

It localises to the cytoplasm. Its function is as follows. Catalyzes the GTP-dependent ribosomal translocation step during translation elongation. During this step, the ribosome changes from the pre-translocational (PRE) to the post-translocational (POST) state as the newly formed A-site-bound peptidyl-tRNA and P-site-bound deacylated tRNA move to the P and E sites, respectively. Catalyzes the coordinated movement of the two tRNA molecules, the mRNA and conformational changes in the ribosome. The chain is Elongation factor G from Clostridium perfringens (strain ATCC 13124 / DSM 756 / JCM 1290 / NCIMB 6125 / NCTC 8237 / Type A).